The chain runs to 227 residues: UPF0173 metal-dependent hydrolase DR_0006 (227 aa).

It belongs to the UPF0173 family.

In Deinococcus radiodurans (strain ATCC 13939 / DSM 20539 / JCM 16871 / CCUG 27074 / LMG 4051 / NBRC 15346 / NCIMB 9279 / VKM B-1422 / R1), this protein is UPF0173 metal-dependent hydrolase DR_0006.